A 207-amino-acid polypeptide reads, in one-letter code: 2,3-bisphosphoglycerate-dependent phosphoglycerate mutase (207 aa).

Substrate contacts are provided by residues 10–17 (RHGQSEWN), 23–24 (TG), arginine 62, 89–92 (ERDY), lysine 100, 116–117 (RR), and 160–161 (GN). The active-site Tele-phosphohistidine intermediate is histidine 11. The active-site Proton donor/acceptor is the glutamate 89.

Belongs to the phosphoglycerate mutase family. BPG-dependent PGAM subfamily. As to quaternary structure, homodimer.

The catalysed reaction is (2R)-2-phosphoglycerate = (2R)-3-phosphoglycerate. It participates in carbohydrate degradation; glycolysis; pyruvate from D-glyceraldehyde 3-phosphate: step 3/5. Catalyzes the interconversion of 2-phosphoglycerate and 3-phosphoglycerate. The polypeptide is 2,3-bisphosphoglycerate-dependent phosphoglycerate mutase (Xanthobacter autotrophicus (strain ATCC BAA-1158 / Py2)).